The sequence spans 368 residues: Glutamate 5-kinase (368 aa).

Residue K13 coordinates ATP. Residues S54, D141, and N153 each contribute to the substrate site. An ATP-binding site is contributed by S173–D174. Residues R278–P355 enclose the PUA domain.

The protein belongs to the glutamate 5-kinase family.

Its subcellular location is the cytoplasm. It catalyses the reaction L-glutamate + ATP = L-glutamyl 5-phosphate + ADP. The protein operates within amino-acid biosynthesis; L-proline biosynthesis; L-glutamate 5-semialdehyde from L-glutamate: step 1/2. Its function is as follows. Catalyzes the transfer of a phosphate group to glutamate to form L-glutamate 5-phosphate. In Dinoroseobacter shibae (strain DSM 16493 / NCIMB 14021 / DFL 12), this protein is Glutamate 5-kinase.